Reading from the N-terminus, the 219-residue chain is uncharacterized protein (219 aa).

This is an uncharacterized protein from Mycoplasma genitalium (strain ATCC 33530 / DSM 19775 / NCTC 10195 / G37) (Mycoplasmoides genitalium).